Here is a 480-residue protein sequence, read N- to C-terminus: tRNA-2-methylthio-N(6)-dimethylallyladenosine synthase (480 aa).

The MTTase N-terminal domain occupies 29-145; sequence GSFWIQTFGC…LEALLTQVDN (117 aa). Residues Cys-38, Cys-74, Cys-108, Cys-180, Cys-184, and Cys-187 each contribute to the [4Fe-4S] cluster site. The region spanning 166 to 403 is the Radical SAM core domain; sequence RDSTICAWVN…NALVERIALQ (238 aa). The 69-residue stretch at 406–474 folds into the TRAM domain; sequence SRYSGKVEQV…AFSLSGTPCE (69 aa).

Belongs to the methylthiotransferase family. MiaB subfamily. Monomer. [4Fe-4S] cluster is required as a cofactor.

The protein resides in the cytoplasm. The catalysed reaction is N(6)-dimethylallyladenosine(37) in tRNA + (sulfur carrier)-SH + AH2 + 2 S-adenosyl-L-methionine = 2-methylsulfanyl-N(6)-dimethylallyladenosine(37) in tRNA + (sulfur carrier)-H + 5'-deoxyadenosine + L-methionine + A + S-adenosyl-L-homocysteine + 2 H(+). Functionally, catalyzes the methylthiolation of N6-(dimethylallyl)adenosine (i(6)A), leading to the formation of 2-methylthio-N6-(dimethylallyl)adenosine (ms(2)i(6)A) at position 37 in tRNAs that read codons beginning with uridine. The protein is tRNA-2-methylthio-N(6)-dimethylallyladenosine synthase of Prochlorococcus marinus (strain MIT 9313).